The chain runs to 454 residues: CCA-adding enzyme (454 aa).

Residues Ser-59 and Arg-62 each coordinate ATP. The CTP site is built by Ser-59 and Arg-62. Mg(2+) is bound by residues Asp-71, Asp-73, and Asp-125. The ATP site is built by His-148, Lys-167, and Tyr-176. CTP-binding residues include His-148, Lys-167, and Tyr-176.

It belongs to the tRNA nucleotidyltransferase/poly(A) polymerase family. Archaeal CCA-adding enzyme subfamily. In terms of assembly, homodimer. Mg(2+) serves as cofactor.

The catalysed reaction is a tRNA precursor + 2 CTP + ATP = a tRNA with a 3' CCA end + 3 diphosphate. The enzyme catalyses a tRNA with a 3' CCA end + 2 CTP + ATP = a tRNA with a 3' CCACCA end + 3 diphosphate. In terms of biological role, catalyzes the addition and repair of the essential 3'-terminal CCA sequence in tRNAs without using a nucleic acid template. Adds these three nucleotides in the order of C, C, and A to the tRNA nucleotide-73, using CTP and ATP as substrates and producing inorganic pyrophosphate. tRNA 3'-terminal CCA addition is required both for tRNA processing and repair. Also involved in tRNA surveillance by mediating tandem CCA addition to generate a CCACCA at the 3' terminus of unstable tRNAs. While stable tRNAs receive only 3'-terminal CCA, unstable tRNAs are marked with CCACCA and rapidly degraded. This chain is CCA-adding enzyme, found in Methanosarcina barkeri (strain Fusaro / DSM 804).